Consider the following 278-residue polypeptide: Sulfur carrier protein FdhD (278 aa).

C121 functions as the Cysteine persulfide intermediate in the catalytic mechanism. 260-265 (FCKPGR) contributes to the Mo-bis(molybdopterin guanine dinucleotide) binding site.

This sequence belongs to the FdhD family.

Its subcellular location is the cytoplasm. Its function is as follows. Required for formate dehydrogenase (FDH) activity. Acts as a sulfur carrier protein that transfers sulfur from IscS to the molybdenum cofactor prior to its insertion into FDH. The polypeptide is Sulfur carrier protein FdhD (Klebsiella pneumoniae subsp. pneumoniae (strain ATCC 700721 / MGH 78578)).